Consider the following 465-residue polypeptide: Midnolin (465 aa).

Positions 32–106 (MSLAIHSTTG…LTLVPTVEAG (75 aa)) constitute a Ubiquitin-like domain. Disordered regions lie at residues 185–262 (SVAT…SRKP) and 400–445 (RLRR…GLDF). 2 stretches are compositionally biased toward low complexity: residues 195 to 219 (RPVS…PSPV) and 240 to 257 (SPPA…SPTP). A required for nucleolar localization region spans residues 397-424 (QQKRLRRKARRDARGPYHWTPSRKAGRS).

Interacts with GCK; the interaction occurs preferentially at low glucose levels. Interacts with the proteasome. Expressed at high levels in brain and liver with significantly lower levels in muscle.

Its subcellular location is the nucleus. The protein localises to the cytoplasm. It is found in the cytosol. The protein resides in the nucleolus. In terms of biological role, facilitates the ubiquitin-independent proteasomal degradation of stimulus-induced transcription factors such as FOSB, EGR1, NR4A1, and IRF4 to the proteasome for degradation. Promotes also the degradation of other substrates such as CBX4. Plays a role in inhibiting the activity of glucokinase GCK and both glucose-induced and basal insulin secretion. The sequence is that of Midnolin (Midn) from Mus musculus (Mouse).